Reading from the N-terminus, the 187-residue chain is NADH-quinone oxidoreductase subunit C 2 (187 aa).

The tract at residues 153–187 (YKDKLNPFGAEGPPPTQPDLATRDIPQGRPSTPES) is disordered.

This sequence belongs to the complex I 30 kDa subunit family. NDH-1 is composed of 14 different subunits. Subunits NuoB, C, D, E, F, and G constitute the peripheral sector of the complex.

It is found in the cell inner membrane. The catalysed reaction is a quinone + NADH + 5 H(+)(in) = a quinol + NAD(+) + 4 H(+)(out). Functionally, NDH-1 shuttles electrons from NADH, via FMN and iron-sulfur (Fe-S) centers, to quinones in the respiratory chain. The immediate electron acceptor for the enzyme in this species is believed to be ubiquinone. Couples the redox reaction to proton translocation (for every two electrons transferred, four hydrogen ions are translocated across the cytoplasmic membrane), and thus conserves the redox energy in a proton gradient. In Rhizobium etli (strain CIAT 652), this protein is NADH-quinone oxidoreductase subunit C 2.